The chain runs to 1074 residues: Phospholipase D1 (1074 aa).

The region spanning 81 to 212 (IKAQVLEVER…TEFLDISQLS (132 aa)) is the PX domain. A PH domain is found at 219–328 (PKGIEGMIMK…WGGAIEEFIQ (110 aa)). S-palmitoyl cysteine attachment occurs at residues Cys240 and Cys241. The region spanning 459 to 486 (YLWAHHEKLVIIDQSVAFVGGIDLAYGR) is the PLD phosphodiesterase 1 domain. The interval 463 to 928 (HHEKLVIIDQ…MLGKRDSEMA (466 aa)) is catalytic. Phosphoserine is present on residues Ser499, Ser561, and Ser629. The PLD phosphodiesterase 2 domain occupies 891 to 918 (ELIYVHSKLLIADDNTVIIGSANINDRS).

The protein belongs to the phospholipase D family. As to quaternary structure, interacts with PIP5K1B. As to expression, expressed abundantly in the pancreas and heart and at high levels in brain, placenta, spleen, uterus and small intestine.

Its subcellular location is the cytoplasm. The protein localises to the perinuclear region. It is found in the endoplasmic reticulum membrane. The protein resides in the golgi apparatus membrane. It localises to the late endosome membrane. The enzyme catalyses a 1,2-diacyl-sn-glycero-3-phosphocholine + H2O = a 1,2-diacyl-sn-glycero-3-phosphate + choline + H(+). The catalysed reaction is ethanol + a 1,2-diacyl-sn-glycero-3-phosphocholine = 1,2-diacyl-sn-glycero-3-phosphoethanol + choline. It carries out the reaction 1,2-dihexadecanoyl-sn-glycero-3-phosphocholine + H2O = 1,2-dihexadecanoyl-sn-glycero-3-phosphate + choline + H(+). With respect to regulation, stimulated by phosphatidylinositol 4,5-bisphosphate and phosphatidylinositol 3,4,5-trisphosphate, activated by the phosphokinase C-alpha, by the ADP-ribosylation factor-1 (ARF-1), and to a lesser extent by GTP-binding proteins: RHO A, RAC-1 and CDC42. Inhibited by oleate. Functionally, function as phospholipase selective for phosphatidylcholine. Implicated as a critical step in numerous cellular pathways, including signal transduction, membrane trafficking, and the regulation of mitosis. May be involved in the regulation of perinuclear intravesicular membrane traffic. The sequence is that of Phospholipase D1 from Homo sapiens (Human).